The following is a 538-amino-acid chain: C-22 sterol desaturase ERG5 (538 aa).

The helical transmembrane segment at L46–I66 threads the bilayer. Glycyl lysine isopeptide (Lys-Gly) (interchain with G-Cter in ubiquitin) cross-links involve residues K164 and K198. C476 is a heme binding site.

Belongs to the cytochrome P450 family. In terms of assembly, interacts with ERG28. The cofactor is heme.

Its subcellular location is the endoplasmic reticulum membrane. The enzyme catalyses 5-dehydroepisterol + NADPH + O2 + H(+) = ergosta-5,7,22,24(28)-tetraen-3beta-ol + NADP(+) + 2 H2O. It participates in steroid metabolism; ergosterol biosynthesis; ergosterol from zymosterol: step 4/5. Its function is as follows. C-22 sterol desaturase; part of the third module of ergosterol biosynthesis pathway that includes the late steps of the pathway. ERG5 converts 5-dehydroepisterol into ergosta-5,7,22,24(28)-tetraen-3beta-ol by forming the C-22(23) double bond in the sterol side chain. The third module or late pathway involves the ergosterol synthesis itself through consecutive reactions that mainly occur in the endoplasmic reticulum (ER) membrane. Firstly, the squalene synthase ERG9 catalyzes the condensation of 2 farnesyl pyrophosphate moieties to form squalene, which is the precursor of all steroids. Squalene synthase is crucial for balancing the incorporation of farnesyl diphosphate (FPP) into sterol and nonsterol isoprene synthesis. Secondly, the squalene epoxidase ERG1 catalyzes the stereospecific oxidation of squalene to (S)-2,3-epoxysqualene, which is considered to be a rate-limiting enzyme in steroid biosynthesis. Then, the lanosterol synthase ERG7 catalyzes the cyclization of (S)-2,3 oxidosqualene to lanosterol, a reaction that forms the sterol core. In the next steps, lanosterol is transformed to zymosterol through a complex process involving various demethylation, reduction and desaturation reactions. The lanosterol 14-alpha-demethylase ERG11 (also known as CYP51) catalyzes C14-demethylation of lanosterol to produce 4,4'-dimethyl cholesta-8,14,24-triene-3-beta-ol, which is critical for ergosterol biosynthesis. The C-14 reductase ERG24 reduces the C14=C15 double bond of 4,4-dimethyl-cholesta-8,14,24-trienol to produce 4,4-dimethyl-cholesta-8,24-dienol. 4,4-dimethyl-cholesta-8,24-dienol is substrate of the C-4 demethylation complex ERG25-ERG26-ERG27 in which ERG25 catalyzes the three-step monooxygenation required for the demethylation of 4,4-dimethyl and 4alpha-methylsterols, ERG26 catalyzes the oxidative decarboxylation that results in a reduction of the 3-beta-hydroxy group at the C-3 carbon to an oxo group, and ERG27 is responsible for the reduction of the keto group on the C-3. ERG28 has a role as a scaffold to help anchor ERG25, ERG26 and ERG27 to the endoplasmic reticulum and ERG29 regulates the activity of the iron-containing C4-methylsterol oxidase ERG25. Then, the sterol 24-C-methyltransferase ERG6 catalyzes the methyl transfer from S-adenosyl-methionine to the C-24 of zymosterol to form fecosterol. The C-8 sterol isomerase ERG2 catalyzes the reaction which results in unsaturation at C-7 in the B ring of sterols and thus converts fecosterol to episterol. The sterol-C5-desaturase ERG3 then catalyzes the introduction of a C-5 double bond in the B ring to produce 5-dehydroepisterol. The C-22 sterol desaturase ERG5 further converts 5-dehydroepisterol into ergosta-5,7,22,24(28)-tetraen-3beta-ol by forming the C-22(23) double bond in the sterol side chain. Finally, ergosta-5,7,22,24(28)-tetraen-3beta-ol is substrate of the C-24(28) sterol reductase ERG4 to produce ergosterol. This chain is C-22 sterol desaturase ERG5, found in Saccharomyces cerevisiae (strain ATCC 204508 / S288c) (Baker's yeast).